A 376-amino-acid polypeptide reads, in one-letter code: TraB domain-containing protein (376 aa).

Met1 carries the post-translational modification N-acetylmethionine. Thr64 bears the Phosphothreonine mark.

In Mus musculus (Mouse), this protein is TraB domain-containing protein (Trabd).